A 324-amino-acid polypeptide reads, in one-letter code: Corticotropin-releasing factor-binding protein (324 aa).

The N-terminal stretch at 1–23 is a signal peptide; the sequence is MAPTLKLQCHFILVCLLALRGES. Intrachain disulfides connect Cys62-Cys83, Cys106-Cys143, Cys185-Cys207, Cys239-Cys266, and Cys279-Cys320. The N-linked (GlcNAc...) asparagine glycan is linked to Asn206.

This sequence belongs to the CRF-binding protein family.

It localises to the secreted. Binds CRF and inactivates it. May prevent inappropriate pituitary-adrenal stimulation in pregnancy. The protein is Corticotropin-releasing factor-binding protein (CRHBP) of Ovis aries (Sheep).